Consider the following 243-residue polypeptide: Transcription factor TFIIS homolog (243 aa).

A TFIIS central domain is found at 77–201; the sequence is MRDIIQMMFF…SQQKVAEKTS (125 aa). Residues 202 to 242 form a TFIIS-type zinc finger; sequence QLYKCPNCKQRMCTYREVQTRALDEPSTIFCTCKKCGHEFI. Residues cysteine 206, cysteine 209, cysteine 234, and cysteine 237 each contribute to the Zn(2+) site.

Belongs to the TFS-II family.

Its function is as follows. Putative initiation factor. Necessary for efficient transcription elongation past template-encoded arresting sites. The sequence is that of Transcription factor TFIIS homolog from Ornithodoros (relapsing fever ticks).